The chain runs to 468 residues: uncharacterized protein (468 aa).

The next 12 helical transmembrane spans lie at 13–33, 40–60, 76–96, 112–132, 141–161, 194–214, 237–257, 260–280, 328–348, 354–374, 414–434, and 443–463; these read LEAF…YALF, LMII…HCYL, ALLI…GGTI, LYVT…TSWG, FMGV…AVVA, LLYT…VYGL, VYHF…GSIT, PTIP…ILIQ, CFCA…TVII, FVHS…TMIG, IIEP…TLGV, and AILC…GIGI.

It belongs to the NhaC Na(+)/H(+) (TC 2.A.35) antiporter family.

The protein localises to the cell membrane. This is an uncharacterized protein from Haemophilus influenzae (strain ATCC 51907 / DSM 11121 / KW20 / Rd).